Consider the following 622-residue polypeptide: tRNA uridine 5-carboxymethylaminomethyl modification enzyme MnmG (622 aa).

10-15 (GGGHAG) is a binding site for FAD. 269 to 283 (GPRYCPSVEDKIVKF) lines the NAD(+) pocket.

The protein belongs to the MnmG family. As to quaternary structure, homodimer. Heterotetramer of two MnmE and two MnmG subunits. The cofactor is FAD.

It localises to the cytoplasm. NAD-binding protein involved in the addition of a carboxymethylaminomethyl (cmnm) group at the wobble position (U34) of certain tRNAs, forming tRNA-cmnm(5)s(2)U34. The polypeptide is tRNA uridine 5-carboxymethylaminomethyl modification enzyme MnmG (Bartonella quintana (strain Toulouse) (Rochalimaea quintana)).